The sequence spans 88 residues: RQC P-site tRNA stabilizing factor (88 aa).

The region spanning 1 to 60 (MRLDKYLKVSRIIKRRTVAKEVADKGRIKVNGILAKSSTDLKVNDQVEIRFGNKLLLVKV) is the S4 RNA-binding domain.

The protein belongs to the RqcP family. Associates with stalled 50S ribosomal subunits. Binds to RqcH, 23S rRNA and the P-site tRNA. Does not require RqcH for association with 50S subunits.

Functionally, key component of the ribosome quality control system (RQC), a ribosome-associated complex that mediates the extraction of incompletely synthesized nascent chains from stalled ribosomes and their subsequent degradation. RqcH recruits Ala-charged tRNA, and with RqcP directs the elongation of stalled nascent chains on 50S ribosomal subunits, leading to non-templated C-terminal alanine extensions (Ala tail). The Ala tail promotes nascent chain degradation. RqcP is associated with the translocation-like movement of the peptidyl-tRNA from the A-site into the P-site. The polypeptide is RQC P-site tRNA stabilizing factor (Streptococcus pneumoniae (strain ATCC BAA-255 / R6)).